Here is a 418-residue protein sequence, read N- to C-terminus: Putative F-box protein At1g20795 (418 aa).

The region spanning 1 to 46 (METLGLPLPLFEKILFRLDPISLVMMKCTRRSFNSHISEDPYFKSK) is the F-box domain.

This is Putative F-box protein At1g20795 from Arabidopsis thaliana (Mouse-ear cress).